We begin with the raw amino-acid sequence, 397 residues long: Transcription factor TGAL6 (397 aa).

The region spanning 104–148 (PDKVLRRLAQNREAARKSRLRKKAYIQQLETSRLKLAQLEQELQR) is the bZIP domain. The basic motif stretch occupies residues 106 to 126 (KVLRRLAQNREAARKSRLRKK). Residues 132-146 (LETSRLKLAQLEQEL) are leucine-zipper. The DOG1 domain maps to 175–390 (ALGFEIKYSH…RALSSLWAAR (216 aa)).

The protein belongs to the bZIP family.

Its subcellular location is the nucleus. Its function is as follows. Transcriptional regulator involved in defense response. The protein is Transcription factor TGAL6 of Oryza sativa subsp. japonica (Rice).